A 464-amino-acid chain; its full sequence is Asparagine--tRNA ligase (464 aa).

This sequence belongs to the class-II aminoacyl-tRNA synthetase family. Homodimer.

It localises to the cytoplasm. The enzyme catalyses tRNA(Asn) + L-asparagine + ATP = L-asparaginyl-tRNA(Asn) + AMP + diphosphate + H(+). The chain is Asparagine--tRNA ligase from Azobacteroides pseudotrichonymphae genomovar. CFP2.